A 329-amino-acid polypeptide reads, in one-letter code: Cytosolic Fe-S cluster assembly factor NBP35 (329 aa).

The interval 1 to 33 (MAPSQVEDISKTELETPEHCPGPESEQAGKEDA) is disordered. Positions 8-18 (DISKTELETPE) are enriched in basic and acidic residues. C20, C34, C37, and C43 together coordinate [4Fe-4S] cluster. 74–81 (GKGGVGKS) lines the ATP pocket. [4Fe-4S] cluster is bound by residues C248 and C251.

The protein belongs to the Mrp/NBP35 ATP-binding proteins family. NUBP1/NBP35 subfamily. Heterotetramer of 2 NBP35 and 2 CFD1 chains. It depends on [4Fe-4S] cluster as a cofactor.

The protein resides in the cytoplasm. Its subcellular location is the nucleus. Its function is as follows. Component of the cytosolic iron-sulfur (Fe/S) protein assembly (CIA) machinery. Required for maturation of extramitochondrial Fe-S proteins. The NBP35-CFD1 heterotetramer forms a Fe-S scaffold complex, mediating the de novo assembly of an Fe-S cluster and its transfer to target apoproteins. Required for biogenesis and export of both ribosomal subunits, which may reflect a role in assembly of the Fe/S clusters in RLI1, a protein which performs rRNA processing and ribosome export. This is Cytosolic Fe-S cluster assembly factor NBP35 from Debaryomyces hansenii (strain ATCC 36239 / CBS 767 / BCRC 21394 / JCM 1990 / NBRC 0083 / IGC 2968) (Yeast).